Reading from the N-terminus, the 492-residue chain is Tyrosinase-like protein 1 (492 aa).

The first 22 residues, 1-22, serve as a signal peptide directing secretion; sequence MDKMRTLQSLIVKLTLLYGALC. Cu cation is bound by residues His147, His155, His164, His289, His293, and His316. The tract at residues 472-492 is disordered; that stretch reads SEPPLQLEGPSFTSSFDDPRI. Positions 482–492 are enriched in polar residues; the sequence is SFTSSFDDPRI.

The cofactor is Cu(2+). In terms of tissue distribution, prismatic layer of shell (at protein level). Expressed primarily in the mantle with highest level in the mantle edge and lower level in the mantle pallium.

It localises to the secreted. This chain is Tyrosinase-like protein 1, found in Margaritifera margaritifera (Freshwater pearl mussel).